The chain runs to 322 residues: DNA primase small subunit PriS (322 aa).

Residues Asp86, Asp88, and Asp226 contribute to the active site.

The protein belongs to the eukaryotic-type primase small subunit family. As to quaternary structure, heterodimer of a small subunit (PriS) and a large subunit (PriL). Mg(2+) is required as a cofactor. The cofactor is Mn(2+).

Functionally, catalytic subunit of DNA primase, an RNA polymerase that catalyzes the synthesis of short RNA molecules used as primers for DNA polymerase during DNA replication. The small subunit contains the primase catalytic core and has DNA synthesis activity on its own. Binding to the large subunit stabilizes and modulates the activity, increasing the rate of DNA synthesis while decreasing the length of the DNA fragments, and conferring RNA synthesis capability. The DNA polymerase activity may enable DNA primase to also catalyze primer extension after primer synthesis. May also play a role in DNA repair. This Thermoplasma acidophilum (strain ATCC 25905 / DSM 1728 / JCM 9062 / NBRC 15155 / AMRC-C165) protein is DNA primase small subunit PriS.